A 170-amino-acid chain; its full sequence is Large ribosomal subunit protein uL10 (170 aa).

It belongs to the universal ribosomal protein uL10 family. Part of the ribosomal stalk of the 50S ribosomal subunit. The N-terminus interacts with L11 and the large rRNA to form the base of the stalk. The C-terminus forms an elongated spine to which L12 dimers bind in a sequential fashion forming a multimeric L10(L12)X complex.

Forms part of the ribosomal stalk, playing a central role in the interaction of the ribosome with GTP-bound translation factors. The sequence is that of Large ribosomal subunit protein uL10 from Jannaschia sp. (strain CCS1).